Here is a 217-residue protein sequence, read N- to C-terminus: Adenylate kinase (217 aa).

10 to 15 (GAGKGT) serves as a coordination point for ATP. Residues 30–59 (STGDMFREAVAAGTELGVKVQNILSSGALV) form an NMP region. Residues Thr31, Arg36, 57–59 (ALV), 85–88 (GYPR), and Gln92 contribute to the AMP site. Positions 126 to 163 (SRRICPKCGKIYNLISMPPVSDQICDDCGEQLVIREDD) are LID. Arg127 is a binding site for ATP. 2 residues coordinate Zn(2+): Cys130 and Cys133. Residue 136–137 (IY) participates in ATP binding. The Zn(2+) site is built by Cys150 and Cys153. AMP is bound by residues Arg160 and Arg171. Arg199 serves as a coordination point for ATP.

Belongs to the adenylate kinase family. Monomer.

It localises to the cytoplasm. It catalyses the reaction AMP + ATP = 2 ADP. It participates in purine metabolism; AMP biosynthesis via salvage pathway; AMP from ADP: step 1/1. In terms of biological role, catalyzes the reversible transfer of the terminal phosphate group between ATP and AMP. Plays an important role in cellular energy homeostasis and in adenine nucleotide metabolism. This chain is Adenylate kinase, found in Pseudothermotoga lettingae (strain ATCC BAA-301 / DSM 14385 / NBRC 107922 / TMO) (Thermotoga lettingae).